The sequence spans 285 residues: MFNWVKTAMLMAGITALFIVIGGMIGGTRGMTIALLFALAMNFFSYWFSDKMVLRMYNAQEVDENTAPQFYRMVRELATRANLPMPRVYLINEDAPNAFATGRNPEHAAVAATTGILRVLSEREMRGVMAHELAHVKHRDILISTITATMAGAISALANFAMFFGGRDENGRPANPIAGIAVALLAPIAGALIQMAISRAREFEADRGGAQISGDPQSLATALDKIHRYAAGIPFQAAEAHPATAQMMIMNPLHGGGLQNLFSTHPATEERIARLMEMARTGRFD.

2 helical membrane-spanning segments follow: residues 7-27 (TAML…MIGG) and 30-50 (GMTI…WFSD). A Zn(2+)-binding site is contributed by His131. The active site involves Glu132. His135 is a binding site for Zn(2+). A run of 2 helical transmembrane segments spans residues 146-166 (ITAT…FFGG) and 177-197 (IAGI…QMAI). Glu202 contacts Zn(2+).

This sequence belongs to the peptidase M48B family. Requires Zn(2+) as cofactor.

It localises to the cell inner membrane. The protein is Protease HtpX homolog of Burkholderia ambifaria (strain MC40-6).